Here is a 194-residue protein sequence, read N- to C-terminus: Type II methyltransferase M.MjaVI (194 aa).

The protein belongs to the N(4)/N(6)-methyltransferase family. N(4) subfamily.

The enzyme catalyses a 2'-deoxycytidine in DNA + S-adenosyl-L-methionine = an N(4)-methyl-2'-deoxycytidine in DNA + S-adenosyl-L-homocysteine + H(+). Its function is as follows. A beta subtype methylase that recognizes the double-stranded sequence 5'-CCGG-3', methylates C-1 on both strands, and protects the DNA from cleavage by the MjaVI endonuclease. The chain is Type II methyltransferase M.MjaVI (mjaVIM) from Methanocaldococcus jannaschii (strain ATCC 43067 / DSM 2661 / JAL-1 / JCM 10045 / NBRC 100440) (Methanococcus jannaschii).